A 40-amino-acid polypeptide reads, in one-letter code: Photosystem II reaction center protein J (40 aa).

The chain crosses the membrane as a helical span at residues 8–28 (IPLWIIGTVTGIIVIGLIGIF).

It belongs to the PsbJ family. PSII is composed of 1 copy each of membrane proteins PsbA, PsbB, PsbC, PsbD, PsbE, PsbF, PsbH, PsbI, PsbJ, PsbK, PsbL, PsbM, PsbT, PsbX, PsbY, PsbZ, Psb30/Ycf12, at least 3 peripheral proteins of the oxygen-evolving complex and a large number of cofactors. It forms dimeric complexes.

The protein localises to the plastid. It localises to the chloroplast thylakoid membrane. Functionally, one of the components of the core complex of photosystem II (PSII). PSII is a light-driven water:plastoquinone oxidoreductase that uses light energy to abstract electrons from H(2)O, generating O(2) and a proton gradient subsequently used for ATP formation. It consists of a core antenna complex that captures photons, and an electron transfer chain that converts photonic excitation into a charge separation. The polypeptide is Photosystem II reaction center protein J (Morus indica (Mulberry)).